Here is a 52-residue protein sequence, read N- to C-terminus: UPF0181 protein VPA0916 (52 aa).

Belongs to the UPF0181 family.

The chain is UPF0181 protein VPA0916 from Vibrio parahaemolyticus serotype O3:K6 (strain RIMD 2210633).